A 223-amino-acid polypeptide reads, in one-letter code: MDDDISLPADTLAILNEFLLERSKREAEEENQIANKTGKDAQFEEDWQLSQFWYSTETKHALRDVVRKLLAERTEDSGDFSIALLSCPSLYKDIREIHDTVHIFEFDKRFEAYGTDFVHYDLNCVGSNPDYLKEHHQQYDLIVADPPFLSQECIAKTCEIITRLQRNQKESKVILCSGEVVEPWLTARLPVLKCSFRPEHERNLGNKFVSYANFNLDEYIENK.

Belongs to the class I-like SAM-binding methyltransferase superfamily. EFM5 family.

Its subcellular location is the cytoplasm. In terms of biological role, S-adenosyl-L-methionine-dependent protein-lysine N-methyltransferase that methylates elongation factor 1-alpha. The sequence is that of Protein-lysine N-methyltransferase CG9154 from Drosophila melanogaster (Fruit fly).